A 323-amino-acid polypeptide reads, in one-letter code: Quinolinate synthase (323 aa).

2 residues coordinate iminosuccinate: His37 and Ser54. Cys99 is a [4Fe-4S] cluster binding site. Iminosuccinate contacts are provided by residues 125 to 127 (YIN) and Ser142. [4Fe-4S] cluster is bound at residue Cys185. Iminosuccinate-binding positions include 211-213 (HPE) and Thr228. Cys278 serves as a coordination point for [4Fe-4S] cluster.

Belongs to the quinolinate synthase family. Type 2 subfamily. It depends on [4Fe-4S] cluster as a cofactor.

The protein resides in the cytoplasm. The enzyme catalyses iminosuccinate + dihydroxyacetone phosphate = quinolinate + phosphate + 2 H2O + H(+). Its pathway is cofactor biosynthesis; NAD(+) biosynthesis; quinolinate from iminoaspartate: step 1/1. Functionally, catalyzes the condensation of iminoaspartate with dihydroxyacetone phosphate to form quinolinate. This is Quinolinate synthase from Trichodesmium erythraeum (strain IMS101).